Reading from the N-terminus, the 487-residue chain is 3-octaprenyl-4-hydroxybenzoate carboxy-lyase (487 aa).

Asn172 contributes to the Mn(2+) binding site. Residues 175–177 (IYR), 189–191 (RWL), and 194–195 (RG) contribute to the prenylated FMN site. A Mn(2+)-binding site is contributed by Glu238. Asp287 functions as the Proton donor in the catalytic mechanism.

Belongs to the UbiD family. In terms of assembly, homohexamer. Requires prenylated FMN as cofactor. It depends on Mn(2+) as a cofactor.

The protein resides in the cell membrane. The catalysed reaction is a 4-hydroxy-3-(all-trans-polyprenyl)benzoate + H(+) = a 2-(all-trans-polyprenyl)phenol + CO2. Its pathway is cofactor biosynthesis; ubiquinone biosynthesis. Its function is as follows. Catalyzes the decarboxylation of 3-octaprenyl-4-hydroxy benzoate to 2-octaprenylphenol, an intermediate step in ubiquinone biosynthesis. This chain is 3-octaprenyl-4-hydroxybenzoate carboxy-lyase, found in Blochmanniella pennsylvanica (strain BPEN).